A 381-amino-acid polypeptide reads, in one-letter code: MYFSRNDLIQKEIAGLAPYAISSTNNGGRFYEEEEHSYRLPFQRDRDRVLHSSAFKRLQYKTQVFIFSVGENYRNRMTHTLEVAGLSRTIASALGLNSHLSESIALAHDLGHTPFGHAGQEILSSLMKDHGGFEHNKQSLRIVTSIEKKYPNFPGLNLCRETLKGLMKHGTEYDPSMMLLERKESGPSLEGMIADLSDEIAYTSHDIEDGWEMGYLHLGDLSENPFWKEVYEECKEQYKDVGEKILVRTAIRTLTNSMVSDLIQNISLQLETNQVKSTEDLIRLWKQGIRIASFSERVDSKFRELKFFLYEKLYRHEDLVRMSDYGKKVIESLFDYFLKHPEKIPDTYKERIEEESLYRVISDYVAGMTDRYAEKIYQSLH.

An HD domain is found at 76 to 203; that stretch reads RMTHTLEVAG…ADLSDEIAYT (128 aa).

It belongs to the dGTPase family. Type 2 subfamily.

This is Deoxyguanosinetriphosphate triphosphohydrolase-like protein from Leptospira borgpetersenii serovar Hardjo-bovis (strain JB197).